Here is a 182-residue protein sequence, read N- to C-terminus: CD-NTase-associated protein 15 (182 aa).

2 helical membrane passes run 11-31 (ITGW…CTVW) and 33-53 (IGWI…TIGY).

Belongs to the CBASS Cap15 membrane effector family. The beta barrel domain oligomerizes; in the presence of cyclic nucleotides (probably 3',2'-cGAMP) higher-level oligomers occur.

Its subcellular location is the cell membrane. In terms of biological role, effector protein of a CBASS antivirus system. CBASS (cyclic oligonucleotide-based antiphage signaling system) provides immunity against bacteriophage. The CD-NTase protein (CdnE) synthesizes cyclic nucleotides in response to infection; these serve as specific second messenger signals. The signals activate a diverse range of effectors, leading to bacterial cell death and thus abortive phage infection. This system triggers membrane disruption without lysis. A type I-B CBASS system. Binds cyclic nucleotide second messenger 3',2'-cGAMP, probably oligomerizing, and induces cell membrane shrinkage and rupture, leading to cell death. Protects S.aureus against phage infection. When the CBASS operon (cdnE-cap15) is introduced in S.aureus strain RN4220 there is strong protection against lytic DNA phages 80alpha-vir and phi-NM1-gamma-6 but little to no protection against phages phi-NM4-gamma-4 or phi-12-gamma-3. The chain is CD-NTase-associated protein 15 from Staphylococcus schleiferi.